The sequence spans 395 residues: Phosphoglycerate kinase (395 aa).

Substrate is bound by residues 20–22 (DLN), Arg-35, 58–61 (HFGR), Arg-117, and Arg-150. ATP contacts are provided by residues Lys-200, Glu-322, and 352 to 355 (GGDT).

It belongs to the phosphoglycerate kinase family. As to quaternary structure, monomer.

The protein localises to the cytoplasm. It catalyses the reaction (2R)-3-phosphoglycerate + ATP = (2R)-3-phospho-glyceroyl phosphate + ADP. The protein operates within carbohydrate degradation; glycolysis; pyruvate from D-glyceraldehyde 3-phosphate: step 2/5. This chain is Phosphoglycerate kinase, found in Brucella suis biovar 1 (strain 1330).